Consider the following 106-residue polypeptide: Transcription and mRNA export factor SUS1 (106 aa).

It belongs to the ENY2 family. In terms of assembly, component of the nuclear pore complex (NPC)-associated TREX-2 complex (transcription and export complex 2), composed of at least SUS1, SAC3, THP1, SEM1, and CDC31. TREX-2 contains 2 SUS1 chains. The TREX-2 complex interacts with the nucleoporin NUP1. Component of the 1.8 MDa SAGA transcription coactivator-HAT complex. SAGA is built of 5 distinct domains with specialized functions. Within the SAGA complex, SUS1, SGF11, SGF73 and UBP8 form an additional subcomplex of SAGA called the DUB module (deubiquitination module). Interacts directly with THP1, SAC3, SGF11, and with the RNA polymerase II.

It localises to the nucleus. It is found in the nucleoplasm. Its subcellular location is the cytoplasm. The protein localises to the P-body. In terms of biological role, involved in mRNA export coupled transcription activation by association with both the TREX-2 and the SAGA complexes. At the promoters, SAGA is required for recruitment of the basal transcription machinery. It influences RNA polymerase II transcriptional activity through different activities such as TBP interaction and promoter selectivity, interaction with transcription activators, and chromatin modification through histone acetylation and deubiquitination. Within the SAGA complex, participates in a subcomplex required for deubiquitination of H2B and for the maintenance of steady-state H3 methylation levels. The TREX-2 complex functions in docking export-competent ribonucleoprotein particles (mRNPs) to the nuclear entrance of the nuclear pore complex (nuclear basket). TREX-2 participates in mRNA export and accurate chromatin positioning in the nucleus by tethering genes to the nuclear periphery. May also be involved in cytoplasmic mRNA decay by interaction with components of P-bodies. This is Transcription and mRNA export factor SUS1 from Mycosarcoma maydis (Corn smut fungus).